The sequence spans 182 residues: Ribosome maturation factor RimM (182 aa).

Residues 103-182 (EDDYYWKDLM…RVEVDWDPGF (80 aa)) enclose the PRC barrel domain.

This sequence belongs to the RimM family. In terms of assembly, binds ribosomal protein uS19.

It localises to the cytoplasm. Functionally, an accessory protein needed during the final step in the assembly of 30S ribosomal subunit, possibly for assembly of the head region. Essential for efficient processing of 16S rRNA. May be needed both before and after RbfA during the maturation of 16S rRNA. It has affinity for free ribosomal 30S subunits but not for 70S ribosomes. This Yersinia pestis bv. Antiqua (strain Antiqua) protein is Ribosome maturation factor RimM.